A 54-amino-acid polypeptide reads, in one-letter code: Anti-adapter protein SpxO (54 aa).

Interacts with SpxH.

Inhibitor of Spx proteolytic control. Acts by interacting with SpxH/YjbH, which disrupts interaction between SpxH and Spx, and inhibits SpxH-enhanced proteolysis of Spx by ClpXP. Required for the stabilization of Spx and activation of Spx-regulated genes in response to cell wall stress. In Bacillus subtilis (strain 168), this protein is Anti-adapter protein SpxO.